Reading from the N-terminus, the 145-residue chain is Small ribosomal subunit protein uS19 (145 aa).

N-acetylalanine is present on A2. A Glycyl lysine isopeptide (Lys-Gly) (interchain with G-Cter in SUMO2) cross-link involves residue K108.

This sequence belongs to the universal ribosomal protein uS19 family. As to quaternary structure, component of the small ribosomal subunit.

The protein localises to the cytoplasm. Its function is as follows. Component of the small ribosomal subunit. The ribosome is a large ribonucleoprotein complex responsible for the synthesis of proteins in the cell. In Bos taurus (Bovine), this protein is Small ribosomal subunit protein uS19 (RPS15).